Here is a 179-residue protein sequence, read N- to C-terminus: Cytochrome c-type biogenesis protein CcmE (179 aa).

Over 1-8 the chain is Cytoplasmic; sequence MNPRRKSR. The chain crosses the membrane as a helical; Signal-anchor for type II membrane protein span at residues 9-29; sequence LTIILFVLLGVTIASSLVLYA. The Periplasmic portion of the chain corresponds to 30-179; it reads LRQNIDLFYT…AVNSVEEGKK (150 aa). Heme contacts are provided by H131 and Y135. Basic and acidic residues-rich tracts occupy residues 138–148 and 161–179; these read PDLSEKMEQVH and ESDR…EGKK. Residues 138–179 form a disordered region; the sequence is PDLSEKMEQVHKPMGISNQDMQGESDRDRLDKAVNSVEEGKK.

This sequence belongs to the CcmE/CycJ family.

The protein localises to the cell inner membrane. Its function is as follows. Heme chaperone required for the biogenesis of c-type cytochromes. Transiently binds heme delivered by CcmC and transfers the heme to apo-cytochromes in a process facilitated by CcmF and CcmH. The chain is Cytochrome c-type biogenesis protein CcmE from Mannheimia succiniciproducens (strain KCTC 0769BP / MBEL55E).